A 185-amino-acid polypeptide reads, in one-letter code: Elongation factor P (185 aa).

Belongs to the elongation factor P family.

It localises to the cytoplasm. Its pathway is protein biosynthesis; polypeptide chain elongation. Functionally, involved in peptide bond synthesis. Stimulates efficient translation and peptide-bond synthesis on native or reconstituted 70S ribosomes in vitro. Probably functions indirectly by altering the affinity of the ribosome for aminoacyl-tRNA, thus increasing their reactivity as acceptors for peptidyl transferase. This Nitrosomonas europaea (strain ATCC 19718 / CIP 103999 / KCTC 2705 / NBRC 14298) protein is Elongation factor P.